Consider the following 404-residue polypeptide: Phosphopentomutase (404 aa).

Residues Asp10, Asp303, His308, Asp344, His345, and His356 each contribute to the Mn(2+) site.

This sequence belongs to the phosphopentomutase family. Requires Mn(2+) as cofactor.

Its subcellular location is the cytoplasm. It carries out the reaction 2-deoxy-alpha-D-ribose 1-phosphate = 2-deoxy-D-ribose 5-phosphate. The enzyme catalyses alpha-D-ribose 1-phosphate = D-ribose 5-phosphate. Its pathway is carbohydrate degradation; 2-deoxy-D-ribose 1-phosphate degradation; D-glyceraldehyde 3-phosphate and acetaldehyde from 2-deoxy-alpha-D-ribose 1-phosphate: step 1/2. In terms of biological role, isomerase that catalyzes the conversion of deoxy-ribose 1-phosphate (dRib-1-P) and ribose 1-phosphate (Rib-1-P) to deoxy-ribose 5-phosphate (dRib-5-P) and ribose 5-phosphate (Rib-5-P), respectively. This Shewanella sp. (strain MR-7) protein is Phosphopentomutase.